The sequence spans 339 residues: UDP-N-acetylglucosamine--N-acetylmuramyl-(pentapeptide) pyrophosphoryl-undecaprenol N-acetylglucosamine transferase (339 aa).

UDP-N-acetyl-alpha-D-glucosamine is bound by residues 11 to 13, asparagine 127, arginine 170, serine 188, isoleucine 235, and glutamine 280; that span reads TGG.

It belongs to the glycosyltransferase 28 family. MurG subfamily.

The protein localises to the cell inner membrane. The enzyme catalyses di-trans,octa-cis-undecaprenyl diphospho-N-acetyl-alpha-D-muramoyl-L-alanyl-D-glutamyl-meso-2,6-diaminopimeloyl-D-alanyl-D-alanine + UDP-N-acetyl-alpha-D-glucosamine = di-trans,octa-cis-undecaprenyl diphospho-[N-acetyl-alpha-D-glucosaminyl-(1-&gt;4)]-N-acetyl-alpha-D-muramoyl-L-alanyl-D-glutamyl-meso-2,6-diaminopimeloyl-D-alanyl-D-alanine + UDP + H(+). Its pathway is cell wall biogenesis; peptidoglycan biosynthesis. Its function is as follows. Cell wall formation. Catalyzes the transfer of a GlcNAc subunit on undecaprenyl-pyrophosphoryl-MurNAc-pentapeptide (lipid intermediate I) to form undecaprenyl-pyrophosphoryl-MurNAc-(pentapeptide)GlcNAc (lipid intermediate II). The sequence is that of UDP-N-acetylglucosamine--N-acetylmuramyl-(pentapeptide) pyrophosphoryl-undecaprenol N-acetylglucosamine transferase from Thermotoga petrophila (strain ATCC BAA-488 / DSM 13995 / JCM 10881 / RKU-1).